We begin with the raw amino-acid sequence, 184 residues long: ATP synthase subunit delta (184 aa).

Belongs to the ATPase delta chain family. F-type ATPases have 2 components, F(1) - the catalytic core - and F(0) - the membrane proton channel. F(1) has five subunits: alpha(3), beta(3), gamma(1), delta(1), epsilon(1). CF(0) has four main subunits: a(1), b(1), b'(1) and c(10-14). The alpha and beta chains form an alternating ring which encloses part of the gamma chain. F(1) is attached to F(0) by a central stalk formed by the gamma and epsilon chains, while a peripheral stalk is formed by the delta, b and b' chains.

The protein localises to the cellular thylakoid membrane. In terms of biological role, f(1)F(0) ATP synthase produces ATP from ADP in the presence of a proton or sodium gradient. F-type ATPases consist of two structural domains, F(1) containing the extramembraneous catalytic core and F(0) containing the membrane proton channel, linked together by a central stalk and a peripheral stalk. During catalysis, ATP synthesis in the catalytic domain of F(1) is coupled via a rotary mechanism of the central stalk subunits to proton translocation. Functionally, this protein is part of the stalk that links CF(0) to CF(1). It either transmits conformational changes from CF(0) to CF(1) or is implicated in proton conduction. The sequence is that of ATP synthase subunit delta from Synechococcus sp. (strain PCC 6716).